A 526-amino-acid polypeptide reads, in one-letter code: MKSSVEKLSATRTKLTIEVPFEELKPEFDKAYATLAQQVNMPGFRKGKVPAKILEARLGRGVVLDQVINEMLPSRYSQAVEENDVKALGQPEIEIAELEDGKHITFTAEVDVRPEIEVPDFSAISVEVAPLKADDEAIDAELKNLQARFGTLKPADRAVKKGDFVSIDLSATIDGETVDEATTEGLSHEVGNDSLIEGLDDALVGMKEGEESTFTSKLVAGEHADEEAEVTVKLGSVKERELPELDDDFAQLASEFDTLDELKESLKGQVEQQLKNTQAGEIRDKVLAEALEQTEFELPEGVVKEQVDAQIQQIIQQFGGDEKVFESMLAAQDMTREKFEEDARSSAEDSVRTQLFLDAVADKEQPEVSQEELMDHIAFTANQYGMDPNQFIMQLQQAGQLGSLFADVRRGKALALNIARTSVKDTDGADVDPKEYFGDVEAEGDKADKAETDKAEEKPKKAPAKKSTTKKSTAKKSTAKKSTAKKSTAKKSTAKKSTTKKATKSTAKKSTAKKTTAKKAAEKKED.

The PPIase FKBP-type domain maps to 162–243 (GDFVSIDLSA…LGSVKERELP (82 aa)). Basic and acidic residues predominate over residues 425–460 (DTDGADVDPKEYFGDVEAEGDKADKAETDKAEEKPK). Positions 425-526 (DTDGADVDPK…AKKAAEKKED (102 aa)) are disordered. Over residues 461-517 (KAPAKKSTTKKSTAKKSTAKKSTAKKSTAKKSTAKKSTTKKATKSTAKKSTAKKTTA) the composition is skewed to basic residues.

The protein belongs to the FKBP-type PPIase family. Tig subfamily.

It is found in the cytoplasm. It carries out the reaction [protein]-peptidylproline (omega=180) = [protein]-peptidylproline (omega=0). Its function is as follows. Involved in protein export. Acts as a chaperone by maintaining the newly synthesized protein in an open conformation. Functions as a peptidyl-prolyl cis-trans isomerase. In Corynebacterium jeikeium (strain K411), this protein is Trigger factor.